Here is a 363-residue protein sequence, read N- to C-terminus: N-acetylmuramate/N-acetylglucosamine kinase (363 aa).

It belongs to the kinase AmgK family.

It carries out the reaction N-acetyl-D-muramate + ATP = N-acetyl-alpha-D-muramate 1-phosphate + ADP + H(+). The catalysed reaction is N-acetyl-D-glucosamine + ATP = N-acetyl-alpha-D-glucosamine 1-phosphate + ADP + H(+). The protein operates within cell wall biogenesis; peptidoglycan recycling. Its function is as follows. Sugar kinase that catalyzes the ATP-dependent phosphorylation of N-acetylmuramate (MurNAc) and N-acetylglucosamine (GlcNAc) at its C1 hydroxyl group, leading to MurNAc alpha-1P and GlcNAc alpha-1P, respectively. Is likely involved in peptidoglycan recycling as part of a cell wall recycling pathway that bypasses de novo biosynthesis of the peptidoglycan precursor UDP-MurNAc. Is able to complement the fosfomycin sensitivity phenotype of a P.putida mutant lacking amgK. The sequence is that of N-acetylmuramate/N-acetylglucosamine kinase from Caulobacter vibrioides (strain ATCC 19089 / CIP 103742 / CB 15) (Caulobacter crescentus).